The primary structure comprises 514 residues: Peptide chain release factor 3 (514 aa).

Positions 8-268 constitute a tr-type G domain; that stretch reads KKRRTFAIIS…TFLEFAPEPH (261 aa). GTP contacts are provided by residues 17-24, 85-89, and 139-142; these read SHPDAGKT, DTPGH, and NKLD.

It belongs to the TRAFAC class translation factor GTPase superfamily. Classic translation factor GTPase family. PrfC subfamily.

The protein resides in the cytoplasm. Functionally, increases the formation of ribosomal termination complexes and stimulates activities of RF-1 and RF-2. It binds guanine nucleotides and has strong preference for UGA stop codons. It may interact directly with the ribosome. The stimulation of RF-1 and RF-2 is significantly reduced by GTP and GDP, but not by GMP. The chain is Peptide chain release factor 3 from Streptococcus pyogenes serotype M2 (strain MGAS10270).